Consider the following 93-residue polypeptide: Stromal cell-derived factor 1 (93 aa).

A signal peptide spans 1 to 21; it reads MDIRTLALFSILLGSLCLSEG. Residues 22-23 carry the Receptor activation motif motif; it reads KP. The tract at residues 29-33 is receptor and heparin binding; sequence RCPCR. 2 cysteine pairs are disulfide-bonded: Cys30–Cys55 and Cys32–Cys71. Residues 41–51, Arg62, Gln69, and Lys85 contribute to the heparin site; that span reads KSNIKHLKILS. 2 receptor binding regions span residues 48–50 and 60–64; these read KIL and VARLK.

Belongs to the intercrine alpha (chemokine CxC) family. In terms of assembly, monomer or homodimer; in equilibrium. Dimer formation is induced by non acidic pH and the presence of multivalent anions, and by binding to cxcr4 or heparin.

Its subcellular location is the secreted. Its function is as follows. Chemoattractant. Activates the C-X-C chemokine receptor cxcr4 to induce a rapid and transient rise in the level of intracellular calcium ions, and chemotaxis. Signaling with cxcr4 mediates the directional movement of mesodermal cells during gastrulation. Binds to the allosteric site (site 2) of integrins and activates them in a cxcr4-independent manner. This Xenopus tropicalis (Western clawed frog) protein is Stromal cell-derived factor 1.